The sequence spans 84 residues: Small ribosomal subunit protein uS17c (84 aa).

The protein belongs to the universal ribosomal protein uS17 family. Part of the 30S ribosomal subunit.

Its subcellular location is the plastid. The protein resides in the chloroplast. One of the primary rRNA binding proteins, it binds specifically to the 5'-end of 16S ribosomal RNA. The protein is Small ribosomal subunit protein uS17c (rps17) of Phaeodactylum tricornutum (strain CCAP 1055/1).